A 267-amino-acid polypeptide reads, in one-letter code: Transcription factor HES-1-A (267 aa).

The disordered stretch occupies residues Met-1 to Glu-43. The segment covering Ser-10–Ser-22 has biased composition (low complexity). Over residues Asp-26–Arg-35 the composition is skewed to basic and acidic residues. The bHLH domain maps to His-34–Leu-91. The 34-residue stretch at Tyr-110–Leu-143 folds into the Orange domain. Positions Trp-264–Trp-267 match the WRPW motif motif.

As to quaternary structure, transcription repression requires formation of a complex with a corepressor protein of the Groucho/TLE family. Interacts with the bHLH protein hes2, and binds DNA in the form of a heterodimer with the bHLH protein hey1/hrt1. Interacts with the bHLH protein hes6; this interaction may inhibit the transcriptional repressor activity. In terms of tissue distribution, starting from late neurula stage, weakly expressed in midline neural cells, where expression is restricted to the superficial layer of the prospective floorplate. Expressed in the posterior somitic mesoderm (PSM) at tailbud stage. During early tailbud stages, broadly expressed within the pronephric mesoderm both around and inside the developing pronephros. During late tailbud to early tadpole stages, expressed more ventrally in the pronephros, and although initially expressed in both the lateral and medial layers, by these later stages expression is predominantly in the lateral layer. Pronephric expression is no longer detectable in late tadpoles (stage 35).

It localises to the nucleus. Its function is as follows. Transcriptional repressor of a subset of early mesodermal genes including myod1 and t/bra. Binds DNA on N-box motifs: 5'-CACNAG-3'. Acts as a negative regulator of myogenesis, mediating Notch signaling to repress expression of myod1. The sequence is that of Transcription factor HES-1-A (hes1-a) from Xenopus laevis (African clawed frog).